Consider the following 354-residue polypeptide: Uroporphyrinogen decarboxylase (354 aa).

Residues 27–31 (RQAGR), Asp77, Tyr154, Thr209, and His327 each bind substrate.

The protein belongs to the uroporphyrinogen decarboxylase family. Homodimer.

It localises to the cytoplasm. The enzyme catalyses uroporphyrinogen III + 4 H(+) = coproporphyrinogen III + 4 CO2. Its pathway is porphyrin-containing compound metabolism; protoporphyrin-IX biosynthesis; coproporphyrinogen-III from 5-aminolevulinate: step 4/4. In terms of biological role, catalyzes the decarboxylation of four acetate groups of uroporphyrinogen-III to yield coproporphyrinogen-III. The protein is Uroporphyrinogen decarboxylase of Salmonella dublin (strain CT_02021853).